The primary structure comprises 1596 residues: A-kinase anchor protein SPHKAP (1596 aa).

5 disordered regions span residues 214-233 (KHGRLAGQRAAEDDTNRSVS), 242-319 (ASEQ…TPKQ), 389-432 (DNSE…GHPA), 462-481 (SGEEYECEDEEEESETDQGE), and 760-809 (EQSD…SSSS). The span at 292-306 (TLCTSSNSQKLSRTY) shows a compositional bias: polar residues. Positions 462 to 479 (SGEEYECEDEEEESETDQ) are enriched in acidic residues. Positions 829–846 (FAEDLATTVVSMATELAA) are PKA-RII subunit binding domain. 3 disordered regions span residues 958–1022 (VVDT…ISKQ), 1282–1310 (VGERRHGFKHSRCNNSGNRPGVEHQENSC), and 1328–1443 (VPLI…SSLG). Positions 959–971 (VDTSKSGQSSRSR) are enriched in polar residues. The span at 1333-1356 (IEPDQREEASEEKGGVETHHREAS) shows a compositional bias: basic and acidic residues. Residues 1357-1372 (HQTQQQSGKGSETATK) show a composition bias toward polar residues. Composition is skewed to low complexity over residues 1398–1409 (LSASSEESGSGS) and 1430–1443 (LSEGNGNSSTSSLG).

This sequence belongs to the AKAP110 family.

It is found in the cytoplasm. In terms of biological role, anchoring protein that mediates the subcellular compartmentation of cAMP-dependent protein kinase (PKA type II). In Danio rerio (Zebrafish), this protein is A-kinase anchor protein SPHKAP (sphkap).